A 216-amino-acid chain; its full sequence is 3-isopropylmalate dehydratase small subunit 2 (216 aa).

This sequence belongs to the LeuD family. LeuD type 1 subfamily. Heterodimer of LeuC and LeuD.

It catalyses the reaction (2R,3S)-3-isopropylmalate = (2S)-2-isopropylmalate. Its pathway is amino-acid biosynthesis; L-leucine biosynthesis; L-leucine from 3-methyl-2-oxobutanoate: step 2/4. Catalyzes the isomerization between 2-isopropylmalate and 3-isopropylmalate, via the formation of 2-isopropylmaleate. The protein is 3-isopropylmalate dehydratase small subunit 2 of Bordetella pertussis (strain Tohama I / ATCC BAA-589 / NCTC 13251).